Here is a 102-residue protein sequence, read N- to C-terminus: Small ribosomal subunit protein uS10 (102 aa).

This sequence belongs to the universal ribosomal protein uS10 family. Part of the 30S ribosomal subunit.

Involved in the binding of tRNA to the ribosomes. The polypeptide is Small ribosomal subunit protein uS10 (Clostridium beijerinckii (strain ATCC 51743 / NCIMB 8052) (Clostridium acetobutylicum)).